A 64-amino-acid polypeptide reads, in one-letter code: Large ribosomal subunit protein bL32 (64 aa).

The disordered stretch occupies residues 1-20 (MALPKYKTSRANTHSRRANW).

It belongs to the bacterial ribosomal protein bL32 family.

The protein is Large ribosomal subunit protein bL32 of Bifidobacterium adolescentis (strain ATCC 15703 / DSM 20083 / NCTC 11814 / E194a).